Reading from the N-terminus, the 142-residue chain is Hemoglobin subunit alpha-1 (142 aa).

Positions 2–142 (LLSADDKKHI…VSTVLTSKYR (141 aa)) constitute a Globin domain. Position 59 (His59) interacts with O2. Position 88 (His88) interacts with heme b.

The protein belongs to the globin family. In terms of assembly, heterotetramer of two alpha chains and two beta chains. As to expression, red blood cells.

Involved in oxygen transport from the lung to the various peripheral tissues. The protein is Hemoglobin subunit alpha-1 (hba1) of Xenopus laevis (African clawed frog).